The primary structure comprises 417 residues: Ig-like V-type domain-containing protein FAM187A (417 aa).

An N-terminal signal peptide occupies residues Met1 to Ala18. Over Phe19–Thr377 the chain is Extracellular. N-linked (GlcNAc...) asparagine glycosylation is found at Asn248 and Asn318. Positions Pro268–Thr362 constitute an Ig-like V-type domain. A disulfide bond links Cys290 and Cys346. The chain crosses the membrane as a helical span at residues Ala378–Leu398. At Cys399–Leu417 the chain is on the cytoplasmic side.

Belongs to the FAM187 family.

The protein resides in the membrane. This is Ig-like V-type domain-containing protein FAM187A (Fam187a) from Mus musculus (Mouse).